The chain runs to 433 residues: 3-phosphoshikimate 1-carboxyvinyltransferase (433 aa).

3 residues coordinate 3-phosphoshikimate: Lys-21, Ser-22, and Arg-26. A phosphoenolpyruvate-binding site is contributed by Lys-21. 2 residues coordinate phosphoenolpyruvate: Gly-92 and Arg-120. 3-phosphoshikimate is bound by residues Ser-166, Gln-168, Asp-317, and Lys-344. Gln-168 contributes to the phosphoenolpyruvate binding site. The Proton acceptor role is filled by Asp-317. Positions 348 and 391 each coordinate phosphoenolpyruvate.

Belongs to the EPSP synthase family. In terms of assembly, monomer.

It is found in the cytoplasm. The enzyme catalyses 3-phosphoshikimate + phosphoenolpyruvate = 5-O-(1-carboxyvinyl)-3-phosphoshikimate + phosphate. It participates in metabolic intermediate biosynthesis; chorismate biosynthesis; chorismate from D-erythrose 4-phosphate and phosphoenolpyruvate: step 6/7. Its function is as follows. Catalyzes the transfer of the enolpyruvyl moiety of phosphoenolpyruvate (PEP) to the 5-hydroxyl of shikimate-3-phosphate (S3P) to produce enolpyruvyl shikimate-3-phosphate and inorganic phosphate. This is 3-phosphoshikimate 1-carboxyvinyltransferase from Caldicellulosiruptor saccharolyticus (strain ATCC 43494 / DSM 8903 / Tp8T 6331).